The following is a 252-amino-acid chain: MKPLGRLRLGVNIDHVATVRNARGTSYPDPLRAGLLAEAAGADGITAHLREDRRHIRDEDITALMQGLRVPLNLEMATTPEMQAIALRHKPHAVCLVPERREERTTEGGIDVAGDIGRLKDFVAPLRAAGCRVSMFIGHDVRQIEASAEIGAAVVELHTGHYCDLVAEGRTAEAARELEALREGAALAHSLGLEVHAGHGISYDTVAEIAAFPQVMELNIGHFLIGEAIFRGLGSAIEGMRRRMDAAREAAA.

Asparagine 12 provides a ligand contact to 3-amino-2-oxopropyl phosphate. 1-deoxy-D-xylulose 5-phosphate is bound at residue 14–15 (DH). Arginine 23 is a 3-amino-2-oxopropyl phosphate binding site. The Proton acceptor role is filled by histidine 48. 1-deoxy-D-xylulose 5-phosphate-binding residues include arginine 50 and histidine 55. The active-site Proton acceptor is glutamate 75. Threonine 105 serves as a coordination point for 1-deoxy-D-xylulose 5-phosphate. Histidine 199 functions as the Proton donor in the catalytic mechanism. 3-amino-2-oxopropyl phosphate is bound by residues glycine 200 and 221-222 (GH).

The protein belongs to the PNP synthase family. Homooctamer; tetramer of dimers.

Its subcellular location is the cytoplasm. The enzyme catalyses 3-amino-2-oxopropyl phosphate + 1-deoxy-D-xylulose 5-phosphate = pyridoxine 5'-phosphate + phosphate + 2 H2O + H(+). The protein operates within cofactor biosynthesis; pyridoxine 5'-phosphate biosynthesis; pyridoxine 5'-phosphate from D-erythrose 4-phosphate: step 5/5. Its function is as follows. Catalyzes the complicated ring closure reaction between the two acyclic compounds 1-deoxy-D-xylulose-5-phosphate (DXP) and 3-amino-2-oxopropyl phosphate (1-amino-acetone-3-phosphate or AAP) to form pyridoxine 5'-phosphate (PNP) and inorganic phosphate. This is Pyridoxine 5'-phosphate synthase from Cereibacter sphaeroides (strain ATCC 17029 / ATH 2.4.9) (Rhodobacter sphaeroides).